The following is a 692-amino-acid chain: UvrABC system protein B (692 aa).

In terms of domain architecture, Helicase ATP-binding spans 32-187; that stretch reads ENIENGEKAQ…LLNDLVGIQF (156 aa). Residue 45–52 coordinates ATP; the sequence is GATGTGKT. Positions 98–121 match the Beta-hairpin motif; the sequence is YYDYYQPEAYVPSSDTYIEKDSSV. The Helicase C-terminal domain maps to 436-631; the sequence is QIDDLVGEIH…TIKKEIRDLI (196 aa). Residues 656–691 enclose the UVR domain; sequence KALVKKLEKEMQQAAAALDFEGAAQLRDMVLELRAM.

This sequence belongs to the UvrB family. As to quaternary structure, forms a heterotetramer with UvrA during the search for lesions. Interacts with UvrC in an incision complex.

It is found in the cytoplasm. In terms of biological role, the UvrABC repair system catalyzes the recognition and processing of DNA lesions. A damage recognition complex composed of 2 UvrA and 2 UvrB subunits scans DNA for abnormalities. Upon binding of the UvrA(2)B(2) complex to a putative damaged site, the DNA wraps around one UvrB monomer. DNA wrap is dependent on ATP binding by UvrB and probably causes local melting of the DNA helix, facilitating insertion of UvrB beta-hairpin between the DNA strands. Then UvrB probes one DNA strand for the presence of a lesion. If a lesion is found the UvrA subunits dissociate and the UvrB-DNA preincision complex is formed. This complex is subsequently bound by UvrC and the second UvrB is released. If no lesion is found, the DNA wraps around the other UvrB subunit that will check the other stand for damage. The polypeptide is UvrABC system protein B (Lactococcus lactis subsp. cremoris (strain SK11)).